A 116-amino-acid chain; its full sequence is Nucleoid-associated protein Tfu_0045 (116 aa).

The protein belongs to the YbaB/EbfC family. Homodimer.

It is found in the cytoplasm. Its subcellular location is the nucleoid. Binds to DNA and alters its conformation. May be involved in regulation of gene expression, nucleoid organization and DNA protection. The polypeptide is Nucleoid-associated protein Tfu_0045 (Thermobifida fusca (strain YX)).